Consider the following 422-residue polypeptide: Phytoene synthase, chloroplastic (422 aa).

Residues 1-83 constitute a chloroplast transit peptide; sequence MSLASSLVVS…GSVIVASMVA (83 aa).

It belongs to the phytoene/squalene synthase family. In terms of assembly, monomer.

Its subcellular location is the plastid. The protein resides in the chloroplast. The catalysed reaction is 2 (2E,6E,10E)-geranylgeranyl diphosphate = 15-cis-phytoene + 2 diphosphate. The protein operates within carotenoid biosynthesis; phytoene biosynthesis; all-trans-phytoene from geranylgeranyl diphosphate: step 1/1. Catalyzes the reaction from prephytoene diphosphate to phytoene. The chain is Phytoene synthase, chloroplastic (PSY) from Cucumis melo (Muskmelon).